A 132-amino-acid polypeptide reads, in one-letter code: Holo-[acyl-carrier-protein] synthase (132 aa).

The Mg(2+) site is built by Asp-8 and Glu-57.

It belongs to the P-Pant transferase superfamily. AcpS family. Requires Mg(2+) as cofactor.

It localises to the cytoplasm. It carries out the reaction apo-[ACP] + CoA = holo-[ACP] + adenosine 3',5'-bisphosphate + H(+). Its function is as follows. Transfers the 4'-phosphopantetheine moiety from coenzyme A to a Ser of acyl-carrier-protein. The polypeptide is Holo-[acyl-carrier-protein] synthase (Methylobacterium nodulans (strain LMG 21967 / CNCM I-2342 / ORS 2060)).